The sequence spans 146 residues: Hemoglobin subunit beta-1/2 (146 aa).

N-acetylvaline is present on valine 1. One can recognise a Globin domain in the interval 2–146 (HLTGEEKSGL…VANALAHKYH (145 aa)). Threonine 12 is subject to Phosphothreonine. Position 59 is an N6-acetyllysine (lysine 59). Histidine 63 serves as a coordination point for heme b. Lysine 82 bears the N6-acetyllysine mark. Residue histidine 92 coordinates heme b. S-nitrosocysteine is present on cysteine 93. N6-acetyllysine is present on lysine 144.

Belongs to the globin family. In terms of assembly, heterotetramer of two alpha chains and two beta chains. As to expression, red blood cells.

Its function is as follows. Involved in oxygen transport from the lung to the various peripheral tissues. The protein is Hemoglobin subunit beta-1/2 (HBB) of Physeter macrocephalus (Sperm whale).